The chain runs to 390 residues: Guanine nucleotide-binding protein alpha-7 subunit (390 aa).

2 stretches are compositionally biased toward low complexity: residues 1-12 (MSSTTTNTTTAT) and 22-42 (SSSP…MSPS). Residues 1-42 (MSSTTTNTTTATPAIQVNGNQSSSPQSPSSSTSTLSPPMSPS) are disordered. Positions 70–390 (SELKLLLLGT…TRQTMEEGGI (321 aa)) constitute a G-alpha domain. The interval 73–86 (KLLLLGTGDSGKST) is G1 motif. GTP contacts are provided by residues 78–85 (GTGDSGKS), 213–219 (LYTRVAS), 238–242 (DVAGQ), 307–310 (NKRD), and Ala-363. Ser-85 contacts Mg(2+). The G2 motif stretch occupies residues 211-219 (DILYTRVAS). The G3 motif stretch occupies residues 234–243 (FRMIDVAGQR). The interval 303 to 310 (ILFLNKRD) is G4 motif. The segment at 361 to 366 (TTATDT) is G5 motif.

This sequence belongs to the G-alpha family. In terms of assembly, g proteins are composed of 3 units; alpha, beta and gamma. The alpha chain contains the guanine nucleotide binding site.

Functionally, guanine nucleotide-binding proteins (G proteins) are involved as modulators or transducers in various transmembrane signaling systems. This chain is Guanine nucleotide-binding protein alpha-7 subunit (gpaG), found in Dictyostelium discoideum (Social amoeba).